We begin with the raw amino-acid sequence, 287 residues long: Ribonuclease Z (287 aa).

Zn(2+)-binding residues include His-64, His-66, Asp-68, His-69, His-124, Asp-191, and His-250. Residue Asp-68 is the Proton acceptor of the active site.

The protein belongs to the RNase Z family. In terms of assembly, homodimer. Requires Zn(2+) as cofactor.

The enzyme catalyses Endonucleolytic cleavage of RNA, removing extra 3' nucleotides from tRNA precursor, generating 3' termini of tRNAs. A 3'-hydroxy group is left at the tRNA terminus and a 5'-phosphoryl group is left at the trailer molecule.. Its function is as follows. Zinc phosphodiesterase, which displays some tRNA 3'-processing endonuclease activity. Probably involved in tRNA maturation, by removing a 3'-trailer from precursor tRNA. This Pyrobaculum arsenaticum (strain DSM 13514 / JCM 11321 / PZ6) protein is Ribonuclease Z.